Reading from the N-terminus, the 258-residue chain is Lipoprotein-releasing system ATP-binding protein LolD (258 aa).

In terms of domain architecture, ABC transporter spans 5-244 (LQCCQLSKSY…PTSSITDPAN (240 aa)). 41 to 48 (GSSGCGKS) is an ATP binding site. Positions 222–258 (LRPLSDNSEQALPPTSSITDPANNIKDNEPQANERHV) are disordered. The segment covering 226–243 (SDNSEQALPPTSSITDPA) has biased composition (polar residues). The segment covering 247–258 (KDNEPQANERHV) has biased composition (basic and acidic residues).

Belongs to the ABC transporter superfamily. Lipoprotein translocase (TC 3.A.1.125) family. In terms of assembly, the complex is composed of two ATP-binding proteins (LolD) and two transmembrane proteins (LolC and LolE).

The protein localises to the cell inner membrane. Functionally, part of the ABC transporter complex LolCDE involved in the translocation of mature outer membrane-directed lipoproteins, from the inner membrane to the periplasmic chaperone, LolA. Responsible for the formation of the LolA-lipoprotein complex in an ATP-dependent manner. The sequence is that of Lipoprotein-releasing system ATP-binding protein LolD from Colwellia psychrerythraea (strain 34H / ATCC BAA-681) (Vibrio psychroerythus).